Consider the following 71-residue polypeptide: Guanine nucleotide-binding protein G(I)/G(S)/G(O) subunit gamma-2 (71 aa).

A2 is subject to N-acetylalanine. C68 is modified (cysteine methyl ester). C68 carries S-geranylgeranyl cysteine lipidation. Positions 69–71 (AIL) are cleaved as a propeptide — removed in mature form.

It belongs to the G protein gamma family. G proteins are composed of 3 units, alpha, beta and gamma. In this context, interacts with GNB2. The heterodimer formed by GNB1 and GNG2 interacts with ARHGEF5. The heterodimer formed by GNB1 and GNG2 interacts with GRK2. Component of the TAS2R14-GNAI1 complex, consisting of TAS2R14, GNAI1, GNB1 and GNG2. Forms complexes with TAS2R14 and G-proteins; these complexes play a role in the perception of bitterness. Component of the TAS2R14-GNAT3 complex, consisting of TAS2R14, GNAT3, GNB1 and GNG2. Component of the TAS2R14-GNAS2 complex, consisting of TAS2R14, GNAS2, GNB1 and GNG2. In terms of tissue distribution, adrenal gland and brain.

The protein resides in the cell membrane. Its function is as follows. Guanine nucleotide-binding proteins (G proteins) are involved as a modulator or transducer in various transmembrane signaling systems. The beta and gamma chains are required for the GTPase activity, for replacement of GDP by GTP, and for G protein-effector interaction. This is Guanine nucleotide-binding protein G(I)/G(S)/G(O) subunit gamma-2 (GNG2) from Bos taurus (Bovine).